Reading from the N-terminus, the 440-residue chain is MQAYFDQLDRVRYEGPQSTNPLAFRHYNPDELVLGKRMEDHLRFAACYWHTFCWNGADMFGVGAFNRPWQQPGEALELAKRKADVAFEFFHKLNVPFYCFHDVDVSPKGASLKEYKNNFAQMVDVLAAKQEQSGVKLLWGTANCFTNPRYGAGAATNPDPEVFSCAATQVVTAMNATHKLGGENYVLWGGREGYETLLNTDLRQEREQIGRFMQMVVEHKHKMGFQGTLLIEPKPQEPTKHQYDYDVATVYGFLKQFGLEKEIKVNIEANHATLAGHSFHHEIATAIALGIFGSVDANRGDAQLGWDTDQFPISVEENALVMYEILKAGGFTTGGLNFDAKVRRQSTDKYDLFYGHIGAMDTMALSLKIAARMVEDGELDKRVAKRYAGWNGELGQQILKGQLSLGELAQYAEQHHLAPVHQSGHQELLENLVNRYLFDK.

Catalysis depends on residues His101 and Asp104. The Mg(2+) site is built by Glu232, Glu268, His271, Asp296, Asp307, Asp309, and Asp339.

It belongs to the xylose isomerase family. In terms of assembly, homotetramer. It depends on Mg(2+) as a cofactor.

It localises to the cytoplasm. It carries out the reaction alpha-D-xylose = alpha-D-xylulofuranose. The protein is Xylose isomerase of Salmonella typhi.